Reading from the N-terminus, the 221-residue chain is GTP cyclohydrolase 1 (221 aa).

3 residues coordinate Zn(2+): Cys-109, His-112, and Cys-180.

Belongs to the GTP cyclohydrolase I family. Toroid-shaped homodecamer, composed of two pentamers of five dimers.

The catalysed reaction is GTP + H2O = 7,8-dihydroneopterin 3'-triphosphate + formate + H(+). It functions in the pathway cofactor biosynthesis; 7,8-dihydroneopterin triphosphate biosynthesis; 7,8-dihydroneopterin triphosphate from GTP: step 1/1. The chain is GTP cyclohydrolase 1 from Sodalis glossinidius (strain morsitans).